The following is a 140-amino-acid chain: Large ribosomal subunit protein uL16 (140 aa).

The protein belongs to the universal ribosomal protein uL16 family. As to quaternary structure, part of the 50S ribosomal subunit.

Functionally, binds 23S rRNA and is also seen to make contacts with the A and possibly P site tRNAs. This is Large ribosomal subunit protein uL16 from Malacoplasma penetrans (strain HF-2) (Mycoplasma penetrans).